The chain runs to 712 residues: Eukaryotic translation initiation factor 3 subunit B (712 aa).

Positions 1 to 98 (MSLTEAEYHE…LFVQFETSEM (98 aa)) are sufficient for interaction with HCR1 and TIF32. The sufficient for interaction with PIC8 stretch occupies residues 1-224 (MSLTEAEYHE…GVQSWGGADF (224 aa)). Positions 37–124 (NYVVVDGAPI…HRLLVNRLSD (88 aa)) constitute an RRM domain. WD repeat units lie at residues 191–229 (RKFF…SIDK), 230–293 (FMHN…RTFA), 301–339 (QKEM…LLDK), 342–384 (IKID…QTAR), 452–493 (ELKE…DFYA), 513–555 (ITDK…SNKN), and 566–604 (DKFS…YEFT).

Belongs to the eIF-3 subunit B family. In terms of assembly, component of the eukaryotic translation initiation factor 3 (eIF-3) complex.

The protein resides in the cytoplasm. Its function is as follows. RNA-binding component of the eukaryotic translation initiation factor 3 (eIF-3) complex, which is involved in protein synthesis of a specialized repertoire of mRNAs and, together with other initiation factors, stimulates binding of mRNA and methionyl-tRNAi to the 40S ribosome. The eIF-3 complex specifically targets and initiates translation of a subset of mRNAs involved in cell proliferation. This is Eukaryotic translation initiation factor 3 subunit B from Scheffersomyces stipitis (strain ATCC 58785 / CBS 6054 / NBRC 10063 / NRRL Y-11545) (Yeast).